The chain runs to 230 residues: Ribonuclease 3 (230 aa).

The RNase III domain occupies 6–135 (VSELRARYGI…FNGALFLDQG (130 aa)). Glu48 contacts Mg(2+). The active site involves Asp52. 2 residues coordinate Mg(2+): Asp121 and Glu124. Glu124 is a catalytic residue. The DRBM domain maps to 161-230 (DYKTNLQEFL…AKKALEQLKA (70 aa)).

The protein belongs to the ribonuclease III family. Homodimer. The cofactor is Mg(2+).

It is found in the cytoplasm. The enzyme catalyses Endonucleolytic cleavage to 5'-phosphomonoester.. Digests double-stranded RNA. Involved in the processing of primary rRNA transcript to yield the immediate precursors to the large and small rRNAs (23S and 16S). Processes some mRNAs, and tRNAs when they are encoded in the rRNA operon. Processes pre-crRNA and tracrRNA of type II CRISPR loci if present in the organism. The polypeptide is Ribonuclease 3 (Latilactobacillus sakei subsp. sakei (strain 23K) (Lactobacillus sakei subsp. sakei)).